The following is a 487-amino-acid chain: Glutamate--tRNA ligase 2 (487 aa).

Residues 24–34 (PSPTGFLHIGG) carry the 'HIGH' region motif. The 'KMSKS' region motif lies at 258–262 (KLSKR). Lys261 contributes to the ATP binding site.

It belongs to the class-I aminoacyl-tRNA synthetase family. Glutamate--tRNA ligase type 1 subfamily. Monomer.

It localises to the cytoplasm. It catalyses the reaction tRNA(Glu) + L-glutamate + ATP = L-glutamyl-tRNA(Glu) + AMP + diphosphate. In terms of biological role, catalyzes the attachment of glutamate to tRNA(Glu) in a two-step reaction: glutamate is first activated by ATP to form Glu-AMP and then transferred to the acceptor end of tRNA(Glu). The protein is Glutamate--tRNA ligase 2 of Novosphingobium aromaticivorans (strain ATCC 700278 / DSM 12444 / CCUG 56034 / CIP 105152 / NBRC 16084 / F199).